Reading from the N-terminus, the 362-residue chain is Protein RecA (362 aa).

67 to 74 is an ATP binding site; it reads GPESSGKT. The span at 337 to 356 shows a compositional bias: low complexity; that stretch reads VADAPADSAPAPVAAVAPKA. Residues 337–362 are disordered; that stretch reads VADAPADSAPAPVAAVAPKASARKSA.

Belongs to the RecA family.

The protein resides in the cytoplasm. Can catalyze the hydrolysis of ATP in the presence of single-stranded DNA, the ATP-dependent uptake of single-stranded DNA by duplex DNA, and the ATP-dependent hybridization of homologous single-stranded DNAs. It interacts with LexA causing its activation and leading to its autocatalytic cleavage. This chain is Protein RecA, found in Clavibacter michiganensis subsp. michiganensis (strain NCPPB 382).